We begin with the raw amino-acid sequence, 440 residues long: Protein translocase subunit SecY (440 aa).

The next 10 membrane-spanning stretches (helical) occupy residues 17–37, 74–94, 116–135, 155–175, 178–198, 213–233, 270–290, 316–336, 374–394, and 403–423; these read IFFTIAMIVLYRIGAQIPSPG, IFAIGIMPYITASIIVQLLTV, YTRYLTVALALLQSSGIVAL, FFDLIVLVITMTAGAVLVMWM, LITEKGVGNGMSLLIFAGIAT, GVVFAVVLASVLILVIGVVFV, VIPVIFASSLIYMPVLITQIV, WQYIVLYFALTIFFSYFYVSV, LLFVGSLYLAVIAVLPNIMLD, and GATPFGGTAILILVSVALTTV.

It belongs to the SecY/SEC61-alpha family. In terms of assembly, component of the Sec protein translocase complex. Heterotrimer consisting of SecY, SecE and SecG subunits. The heterotrimers can form oligomers, although 1 heterotrimer is thought to be able to translocate proteins. Interacts with the ribosome. Interacts with SecDF, and other proteins may be involved. Interacts with SecA.

The protein resides in the cell membrane. Functionally, the central subunit of the protein translocation channel SecYEG. Consists of two halves formed by TMs 1-5 and 6-10. These two domains form a lateral gate at the front which open onto the bilayer between TMs 2 and 7, and are clamped together by SecE at the back. The channel is closed by both a pore ring composed of hydrophobic SecY resides and a short helix (helix 2A) on the extracellular side of the membrane which forms a plug. The plug probably moves laterally to allow the channel to open. The ring and the pore may move independently. The sequence is that of Protein translocase subunit SecY from Corynebacterium glutamicum (strain ATCC 13032 / DSM 20300 / JCM 1318 / BCRC 11384 / CCUG 27702 / LMG 3730 / NBRC 12168 / NCIMB 10025 / NRRL B-2784 / 534).